A 283-amino-acid chain; its full sequence is Undecaprenyl-diphosphatase (283 aa).

Helical transmembrane passes span 1–21, 40–60, 85–105, 117–137, 196–216, 232–252, and 258–278; these read MDII…FLPI, GAAF…IYFY, SRMG…GLLF, YIIS…EYLV, FSFL…LLKV, VATV…LDYL, and YLFI…LSMG.

Belongs to the UppP family.

It localises to the cell inner membrane. It carries out the reaction di-trans,octa-cis-undecaprenyl diphosphate + H2O = di-trans,octa-cis-undecaprenyl phosphate + phosphate + H(+). In terms of biological role, catalyzes the dephosphorylation of undecaprenyl diphosphate (UPP). Confers resistance to bacitracin. In Chloroherpeton thalassium (strain ATCC 35110 / GB-78), this protein is Undecaprenyl-diphosphatase.